Reading from the N-terminus, the 204-residue chain is Guanylate kinase (204 aa).

The Guanylate kinase-like domain occupies 6-184 (GLLIVLSGPA…AVDRIKAIVT (179 aa)). ATP is bound at residue 13 to 20 (GPAGVGKG).

This sequence belongs to the guanylate kinase family.

The protein localises to the cytoplasm. It carries out the reaction GMP + ATP = GDP + ADP. Essential for recycling GMP and indirectly, cGMP. The sequence is that of Guanylate kinase (gmk) from Halalkalibacterium halodurans (strain ATCC BAA-125 / DSM 18197 / FERM 7344 / JCM 9153 / C-125) (Bacillus halodurans).